The following is a 413-amino-acid chain: Imidazolonepropionase (413 aa).

Fe(3+) is bound by residues His70 and His72. His70 and His72 together coordinate Zn(2+). 4-imidazolone-5-propanoate-binding residues include Arg79, Tyr142, and His175. Tyr142 provides a ligand contact to N-formimidoyl-L-glutamate. Fe(3+) is bound at residue His240. Residue His240 coordinates Zn(2+). Glu243 provides a ligand contact to 4-imidazolone-5-propanoate. Position 315 (Asp315) interacts with Fe(3+). Asp315 is a binding site for Zn(2+). 2 residues coordinate N-formimidoyl-L-glutamate: Asn317 and Gly319. Ser320 serves as a coordination point for 4-imidazolone-5-propanoate.

It belongs to the metallo-dependent hydrolases superfamily. HutI family. Zn(2+) serves as cofactor. Requires Fe(3+) as cofactor.

Its subcellular location is the cytoplasm. It catalyses the reaction 4-imidazolone-5-propanoate + H2O = N-formimidoyl-L-glutamate. Its pathway is amino-acid degradation; L-histidine degradation into L-glutamate; N-formimidoyl-L-glutamate from L-histidine: step 3/3. Its function is as follows. Catalyzes the hydrolytic cleavage of the carbon-nitrogen bond in imidazolone-5-propanoate to yield N-formimidoyl-L-glutamate. It is the third step in the universal histidine degradation pathway. This is Imidazolonepropionase from Treponema denticola (strain ATCC 35405 / DSM 14222 / CIP 103919 / JCM 8153 / KCTC 15104).